The primary structure comprises 384 residues: Sodium channel protein Nach (384 aa).

Residues 1-319 lie on the Extracellular side of the membrane; that stretch reads AAFAYFSGFM…LVSHLGSAFS (319 aa). Residues N32 and N215 are each glycosylated (N-linked (GlcNAc...) asparagine). Residues 320-340 form a helical membrane-spanning segment; the sequence is LFVGMSMLSLVEIIYYFTVIL. The Cytoplasmic segment spans residues 341–384; the sequence is RRNYVQECRARQKLQTLHRRPNFGWPGDKNSNQQKSVFYIRGRN.

It belongs to the amiloride-sensitive sodium channel (TC 1.A.6) family.

It localises to the membrane. Functionally, part of a complex that plays a role in tracheal liquid clearance. Probable role in sodium transport. The protein is Sodium channel protein Nach (Nach) of Drosophila virilis (Fruit fly).